The following is a 239-amino-acid chain: tRNA (guanine-N(1)-)-methyltransferase (239 aa).

S-adenosyl-L-methionine is bound by residues Gly109 and 128 to 133 (IGDYVL).

It belongs to the RNA methyltransferase TrmD family. Homodimer.

It localises to the cytoplasm. The catalysed reaction is guanosine(37) in tRNA + S-adenosyl-L-methionine = N(1)-methylguanosine(37) in tRNA + S-adenosyl-L-homocysteine + H(+). In terms of biological role, specifically methylates guanosine-37 in various tRNAs. The protein is tRNA (guanine-N(1)-)-methyltransferase of Thermus thermophilus (strain ATCC 27634 / DSM 579 / HB8).